We begin with the raw amino-acid sequence, 469 residues long: UDP-N-acetylmuramate--L-alanine ligase (469 aa).

112–118 (GTHGKTT) lines the ATP pocket.

Belongs to the MurCDEF family.

It is found in the cytoplasm. It carries out the reaction UDP-N-acetyl-alpha-D-muramate + L-alanine + ATP = UDP-N-acetyl-alpha-D-muramoyl-L-alanine + ADP + phosphate + H(+). Its pathway is cell wall biogenesis; peptidoglycan biosynthesis. Cell wall formation. The sequence is that of UDP-N-acetylmuramate--L-alanine ligase from Herminiimonas arsenicoxydans.